The sequence spans 128 residues: Head peptide (128 aa).

A signal peptide spans Met1–Asp22. Gln23 carries the pyrrolidone carboxylic acid modification. Pro26 carries the post-translational modification Hydroxyproline; partial. The segment at Ser27–Asn128 is disordered. Phe32 bears the Phenylalanine amide mark. Residues Ser35–Ala55 constitute a propeptide that is removed on maturation. Position 56 is a pyrrolidone carboxylic acid (Gln56). Hydroxyproline; partial is present on Pro59. Phe65 is modified (phenylalanine amide). The segment covering Gly66–Ser78 has biased composition (basic and acidic residues). The propeptide occupies Ser68 to Ala79. Gln80 is subject to Pyrrolidone carboxylic acid. Pro83 carries the hydroxyproline; partial modification. Phe89 carries the phenylalanine amide modification. The propeptide occupies Ser92 to Asn128. Residues Arg115–Asn128 are compositionally biased toward basic residues.

Belongs to the NPY family. Expressed in the brain, terminal ganglion, and midgut of adults: numerous neurosecretory cells and midgut endocrine cells. Expression is dynamic depending on reproductive cycle.

The protein localises to the secreted. Its function is as follows. Has a role in inhibiting host-seeking behavior during a reproductive cycle. The sequence is that of Head peptide from Aedes aegypti (Yellowfever mosquito).